Here is a 5654-residue protein sequence, read N- to C-terminus: Mucin-5AC (5654 aa).

The signal sequence occupies residues 1–27 (MSVGRRKLALLWALALALACTRHTGHA). The segment at 27 to 49 (AQDGSSESSYKHHPALSPIARGP) is disordered. The region spanning 79–249 (RVCSTWGSFH…KMDDPTDQCQ (171 aa)) is the VWFD 1 domain. 2 disulfides stabilise this stretch: Cys-81–Cys-211 and Cys-103–Cys-248. Glu-198 serves as a coordination point for Cu(2+). Asn-205 and Asn-258 each carry an N-linked (GlcNAc...) asparagine glycan. Cu(2+)-binding residues include His-320 and His-367. The 57-residue stretch at 338-394 (CPNNMQYHECRSPCADTCSNQEHSRACEDHCVAGCFCPEGTVLDDIGQTGCVPVSKC) folds into the TIL 1 domain. In terms of domain architecture, VWFC 1 spans 394-465 (CACVYNGAAY…CSYVLTKPCD (72 aa)). Asn-415 is a glycosylation site (N-linked (GlcNAc...) asparagine). Residues 432-607 (GTCSVLGGAH…NTFKTQAACP (176 aa)) enclose the VWFD 2 domain. 3 disulfide bridges follow: Cys-434–Cys-571, Cys-456–Cys-606, and Cys-478–Cys-486. Residue Asn-524 is glycosylated (N-linked (GlcNAc...) asparagine). TIL domains follow at residues 704-761 (CPKS…ASNC) and 818-863 (DTGA…AEDC). A VWFD 3 domain is found at 901-1072 (ATCAVYGDGH…NSWKLSPSCP (172 aa)). Cystine bridges form between Cys-903-Cys-1036, Cys-925-Cys-1071, Cys-934-Cys-1033, and Cys-953-Cys-960. A glycan (N-linked (GlcNAc...) asparagine) is linked at Asn-1308. Positions 1336–1377 (LVVSSTHTPSNGPSSAHTGPPSSAWPTTAGTSPRTRLPTASA) are disordered. Positions 1338–1377 (VSSTHTPSNGPSSAHTGPPSSAWPTTAGTSPRTRLPTASA) are enriched in polar residues. The stretch at 1383–1481 (CGEKCLWSPW…RVQCCTPLPC (99 aa)) is one Cys-rich subdomain 1 repeat. The segment at 1383–4731 (CGEKCLWSPW…VLCCETPRGC (3349 aa)) is 9 X Cys-rich subdomain repeats. C-linked (Man) tryptophan glycosylation is present at Trp-1389. Low complexity-rich tracts occupy residues 1483-1539 (TSSS…TFST) and 1547-1575 (ATSTSSMSTTAPGTSVVSSKPTPTEPSTS). A disordered region spans residues 1483-1575 (TSSSPAQTTP…KPTPTEPSTS (93 aa)). The stretch at 1577–1677 (CLQELCTWTE…IQCCETVNVC (101 aa)) is one Cys-rich subdomain 2 repeat. A glycan (C-linked (Man) tryptophan) is linked at Trp-1584. The interval 1688–1733 (ATTRPTPHPTGAQTQTTFTTHMPSASTEQPTATSRGGPTATSVTQG) is disordered. Over residues 1697–1707 (TGAQTQTTFTT) the composition is skewed to low complexity. Over residues 1708–1733 (HMPSASTEQPTATSRGGPTATSVTQG) the composition is skewed to polar residues. The Cys-rich subdomain 3 repeat unit spans residues 1743–1847 (CHPRCTWTKW…VLCCETPRGC (105 aa)). Trp-1749 carries a C-linked (Man) tryptophan glycan. The tract at residues 1849–1948 (MTSTPGSTSS…KPTPTEPSTS (100 aa)) is disordered. Composition is skewed to low complexity over residues 1850–1912 (TSTP…TFST) and 1920–1948 (ATSTSSMSTTAPGTSVVSSKPTPTEPSTS). The Cys-rich subdomain 4 repeat unit spans residues 1950-2050 (CLQELCTWTE…IQCCETVNVC (101 aa)). Residue Trp-1957 is glycosylated (C-linked (Man) tryptophan). Residues 2059 to 2110 (TVATTRPTPHPTGAQTQTTFTTHMPSASTEQPTATSRGGPTATSVTQGTHTT) form a disordered region. Positions 2070 to 2080 (TGAQTQTTFTT) are enriched in low complexity. The segment covering 2081-2110 (HMPSASTEQPTATSRGGPTATSVTQGTHTT) has biased composition (polar residues). A Cys-rich subdomain 5 repeat occupies 2116–2220 (CHPRCTWTTW…VLCCETPKGC (105 aa)). Trp-2122 carries C-linked (Man) tryptophan glycosylation. Residues 2224-2234 (STPVTAPSTPS) are compositionally biased toward low complexity. Residues 2224–3214 (STPVTAPSTP…SHVSISKTTH (991 aa)) are disordered. Residues 2235–2249 (GRATSPTQSTSSWQK) show a composition bias toward polar residues. 2 stretches are compositionally biased toward low complexity: residues 2250–3184 (SRTT…TPGP) and 3192–3214 (PTTSTASVSKTSTSHVSISKTTH). The tract at residues 2257 to 3200 (TTSTTSTPQT…VPTTSTASVS (944 aa)) is 107 X 8 AA approximate tandem repeats of T-T-S-T-T-S-A-P. Thr-2395, Thr-2405, Thr-2451, Thr-2461, Thr-2531, Thr-2541, Thr-2571, Thr-2581, Thr-2699, Thr-2709, Thr-2883, Thr-2893, Thr-2979, Thr-2989, Thr-3067, and Thr-3077 each carry an O-linked (GalNAc) threonine glycan. A Cys-rich subdomain 6 repeat occupies 3222-3326 (CHLRCTWTKW…VLCCETPKGC (105 aa)). The C-linked (Man) tryptophan glycan is linked to Trp-3228. Over residues 3329–3340 (TSTPVTAPSTPS) the composition is skewed to low complexity. Residues 3329–3515 (TSTPVTAPST…SVSKTTHSQP (187 aa)) are disordered. Residues 3341 to 3355 (GRATSPTQSTSSWQK) show a composition bias toward polar residues. Low complexity predominate over residues 3356-3513 (SRTTTLVTTS…HVSVSKTTHS (158 aa)). Residues 3363–3498 (TTSTTSTPQT…VTTTSTASVS (136 aa)) form a 17 X 8 AA approximate tandem repeats of T-T-S-T-T-S-A-P region. A Cys-rich subdomain 7 repeat occupies 3520 to 3660 (CHPRCTWTKW…WQKSRTTTLV (141 aa)). C-linked (Man) tryptophan glycosylation is present at Trp-3526. The segment covering 3628 to 3638 (STSVTAPSTPS) has biased composition (low complexity). The segment at 3628-3951 (STSVTAPSTP…KTTHSQPVTR (324 aa)) is disordered. The span at 3639–3660 (GRATSPTQSTSSWQKSRTTTLV) shows a compositional bias: polar residues. The tract at residues 3661–3931 (TSSITSTTQT…VPTTSTASVS (271 aa)) is 34 X 8 AA approximate tandem repeats of T-T-S-T-T-S-A-P. Residues 3661–3946 (TSSITSTTQT…HVSVSKTTHS (286 aa)) show a composition bias toward low complexity. Asn-3774 is a glycosylation site (N-linked (GlcNAc...) asparagine). One copy of the Cys-rich subdomain 8 repeat lies at 3953–4057 (CHPRCTWTKW…VLCCETPKGC (105 aa)). Trp-3959 carries C-linked (Man) tryptophan glycosylation. A compositionally biased stretch (low complexity) spans 4060–4071 (TSTPVTAPSTPS). The tract at residues 4060 to 4625 (TSTPVTAPST…KTTHSQPVTS (566 aa)) is disordered. Over residues 4072–4088 (GRATSPTQSTSSWQKSR) the composition is skewed to polar residues. Residues 4089–4610 (TTTLVTTSTT…TTPVSKTSTS (522 aa)) are compositionally biased toward low complexity. Residues 4093–4595 (VTTSTTSTPQ…TSGPGTTPSP (503 aa)) form a 58 X 8 AA approximate tandem repeats of T-T-S-T-T-S-A-P region. Residues Thr-4224, Thr-4234, Thr-4296, Thr-4306, Thr-4320, Thr-4330, Thr-4376, Thr-4386, Thr-4440, Thr-4450, Thr-4480, Thr-4490, Thr-4512, Thr-4522, Thr-4568, and Thr-4578 are each glycosylated (O-linked (GalNAc) threonine). The span at 4611–4624 (HLSVSKTTHSQPVT) shows a compositional bias: polar residues. The stretch at 4627-4731 (CHPLCAWTKW…VLCCETPRGC (105 aa)) is one Cys-rich subdomain 9 repeat. A C-linked (Man) tryptophan glycan is attached at Trp-4633. The tract at residues 4830–4849 (TLPPAPATSPSISTSEPVTE) is disordered. Positions 4852–4918 (CPNAVPPRKK…DGCCHHYQCQ (67 aa)) constitute a VWFC 2 domain. N-linked (GlcNAc...) asparagine glycans are attached at residues Asn-4869 and Asn-4942. Residues 4919-5103 (CVCSGWGDPH…VSIPDQPACH (185 aa)) enclose the VWFD 4 domain. Intrachain disulfides connect Cys-4921/Cys-5063, Cys-4943/Cys-5102, and Cys-4967/Cys-4975. N-linked (GlcNAc...) asparagine glycans are attached at residues Asn-5057, Asn-5093, and Asn-5236. The VWFC 3 domain occupies 5276–5345 (PRCLGPHGEP…GQCCPQYSCA (70 aa)). N-linked (GlcNAc...) asparagine glycans are attached at residues Asn-5347, Asn-5377, Asn-5386, Asn-5455, and Asn-5528. One can recognise a VWFC 4 domain in the interval 5381–5448 (TVCSINGTLY…QSGQCCGTCV (68 aa)). Intrachain disulfides connect Cys-5532-Cys-5582, Cys-5546-Cys-5596, Cys-5557-Cys-5612, and Cys-5561-Cys-5614. The CTCK domain occupies 5532-5620 (CAVYHRSLII…ECGCMGRRCP (89 aa)). N-linked (GlcNAc...) asparagine glycosylation is present at Asn-5591. The tract at residues 5622–5654 (PGDTQHSEEAEPEPSQEAESGSWERGVPVSPMH) is disordered.

As to quaternary structure, homomultimer; disulfide-linked. The N- and C-terminus mediate their assembly into higher order structures to form filaments. The CTCK domains of two polypeptides associate in the endoplasmic reticulum to generate intermolecularly disulfide-bonded dimers. These dimers progress to the Golgi apparatus, which is a more acidic environment than the endoplasmic reticulum. Under acidic conditions, the N-termini form non-covalent intermolecular interactions that juxtapose assemblies from different CTCK-linked dimers to produce long, disulfide-linked polymers that remain highly compact until secretion. C-, O- and N-glycosylated. O-glycosylated on the second and last Thr of the Thr-/Ser-rich tandem repeats TTPSPVPTTSTTSA. One form of glycosylation is also known as Lewis B (LeB) blood group antigen, a tetrasaccharide consisting of N-acetylglucosamine having a fucosyl residue attached. It has a role as an epitope and antigen and functions as a receptor for H.pylori binding and facilitates infection. C-mannosylation in the Cys-rich subdomains may be required for proper folding of these regions and for export from the endoplasmic reticulum during biosynthesis. In terms of processing, proteolytic cleavage in the C-terminal is initiated early in the secretory pathway and does not involve a serine protease. The extent of cleavage is increased in the acidic parts of the secretory pathway. Cleavage generates a reactive group which could link the protein to a primary amide. As to expression, highly expressed in surface mucosal cells of respiratory tract and stomach epithelia. Overexpressed in a number of carcinomas. Also expressed in Barrett's esophagus epithelium and in the proximal duodenum.

It localises to the secreted. Functionally, gel-forming glycoprotein of gastric and respiratory tract epithelia that protects the mucosa from infection and chemical damage by binding to inhaled microorganisms and particles that are subsequently removed by the mucociliary system. Interacts with H.pylori in the gastric epithelium, Barrett's esophagus as well as in gastric metaplasia of the duodenum (GMD). This Homo sapiens (Human) protein is Mucin-5AC.